The primary structure comprises 91 residues: PqqA binding protein (91 aa).

This sequence belongs to the PqqD family. In terms of assembly, monomer. Interacts with PqqE.

The protein operates within cofactor biosynthesis; pyrroloquinoline quinone biosynthesis. In terms of biological role, functions as a PqqA binding protein and presents PqqA to PqqE, in the pyrroloquinoline quinone (PQQ) biosynthetic pathway. The protein is PqqA binding protein of Pseudomonas entomophila (strain L48).